The primary structure comprises 692 residues: Protein arginine N-methyltransferase 7 (692 aa).

2 SAM-dependent MTase PRMT-type domains span residues 14–359 and 368–692; these read ENSW…YSLW and AKTV…QEKR.

This sequence belongs to the class I-like SAM-binding methyltransferase superfamily. Protein arginine N-methyltransferase family. PRMT7 subfamily.

Functionally, essential arginine methyltransferase that can both catalyze the formation of omega-N monomethylarginine (MMA) and symmetrical dimethylarginine (sDMA). Specifically mediates the symmetrical dimethylation of arginine residues in the small nuclear ribonucleoproteins SmD1 and SmD3. This Drosophila persimilis (Fruit fly) protein is Protein arginine N-methyltransferase 7 (Art7).